Here is a 332-residue protein sequence, read N- to C-terminus: 4-hydroxyproline 2-epimerase 2 (332 aa).

Cys-89 acts as the Proton acceptor in catalysis. Substrate-binding positions include His-222, Asp-248, and 253–254 (GT).

It belongs to the proline racemase family.

It carries out the reaction trans-4-hydroxy-L-proline = cis-4-hydroxy-D-proline. In terms of biological role, catalyzes the epimerization of trans-4-hydroxy-L-proline (t4LHyp) to cis-4-hydroxy-D-proline (c4DHyp). Is likely involved in a degradation pathway that converts t4LHyp to alpha-ketoglutarate. Displays no proline racemase activity. The protein is 4-hydroxyproline 2-epimerase 2 of Rhizobium rhizogenes (strain K84 / ATCC BAA-868) (Agrobacterium radiobacter).